We begin with the raw amino-acid sequence, 255 residues long: 1-(5-phosphoribosyl)-5-[(5-phosphoribosylamino)methylideneamino] imidazole-4-carboxamide isomerase (255 aa).

Residue aspartate 8 is the Proton acceptor of the active site. Aspartate 129 serves as the catalytic Proton donor.

The protein belongs to the HisA/HisF family.

The protein localises to the cytoplasm. It catalyses the reaction 1-(5-phospho-beta-D-ribosyl)-5-[(5-phospho-beta-D-ribosylamino)methylideneamino]imidazole-4-carboxamide = 5-[(5-phospho-1-deoxy-D-ribulos-1-ylimino)methylamino]-1-(5-phospho-beta-D-ribosyl)imidazole-4-carboxamide. The protein operates within amino-acid biosynthesis; L-histidine biosynthesis; L-histidine from 5-phospho-alpha-D-ribose 1-diphosphate: step 4/9. This chain is 1-(5-phosphoribosyl)-5-[(5-phosphoribosylamino)methylideneamino] imidazole-4-carboxamide isomerase, found in Synechococcus sp. (strain CC9605).